Consider the following 146-residue polypeptide: MPRLRTSRTKRPPDGFDEIEPTLIEFQDRMRQIENTMGKGTKTEMLAPIFQLHHQRSRYIYDLYYKREAISTELYNWLLKQNYADGNLIAKWKKPGYEKLCCLRCIQTAESKFGSTCICRVPKSKLDKDQRVRCTHCGCNGCASCD.

It belongs to the BUD31 (G10) family. In terms of assembly, belongs to the 40S cdc5-associated complex (or cwf complex), a spliceosome sub-complex reminiscent of a late-stage spliceosome composed of the U2, U5 and U6 snRNAs and at least brr2, cdc5, cwf2/prp3, cwf3/syf1, cwf4/syf3, cwf5/ecm2, spp42/cwf6, cwf7/spf27, cwf8, cwf9, cwf10, cwf11, cwf12, prp45/cwf13, cwf14, cwf15, cwf16, cwf17, cwf18, cwf19, cwf20, cwf21, cwf22, cwf23, cwf24, cwf25, cwf26, cyp7/cwf27, cwf28, cwf29/ist3, lea1, msl1, prp5/cwf1, prp10, prp12/sap130, prp17, prp22, sap61, sap62, sap114, sap145, slu7, smb1, smd1, smd3, smf1, smg1 and syf2.

It localises to the nucleus. Involved in mRNA splicing where it associates with cdc5 and the other cwf proteins as part of the spliceosome. This chain is Pre-mRNA-splicing factor cwf14 (cwf14), found in Schizosaccharomyces pombe (strain 972 / ATCC 24843) (Fission yeast).